A 537-amino-acid chain; its full sequence is Beta-hexosaminidase subunit beta (537 aa).

A signal peptide spans 1–23 (MPGSPRRAPGLLLQALVAMVSLA). A glycan (N-linked (GlcNAc...) asparagine) is linked at N62. A disulfide bond links C69 and C115. N168 and N305 each carry an N-linked (GlcNAc...) asparagine glycan. 2 disulfide bridges follow: C287-C338 and C512-C529. E333 functions as the Proton donor in the catalytic mechanism.

This sequence belongs to the glycosyl hydrolase 20 family. In terms of assembly, there are 3 forms of beta-hexosaminidase: hexosaminidase A is a heterodimer composed of one subunit alpha and one subunit beta (chain A and B); hexosaminidase B is a homodimer of two beta subunits (two chains A and B); hexosaminidase S is a homodimer of two alpha subunits. The composition of the dimer (isozyme A versus isozyme S) has a significant effect on the substrate specificity of the alpha subunit active site.

It is found in the lysosome. It localises to the cytoplasmic vesicle. Its subcellular location is the secretory vesicle. The protein resides in the cortical granule. The enzyme catalyses Hydrolysis of terminal non-reducing N-acetyl-D-hexosamine residues in N-acetyl-beta-D-hexosaminides.. It catalyses the reaction N-acetyl-beta-D-galactosaminyl-(1-&gt;4)-beta-D-3-sulfogalactosyl-(1-&gt;4)-beta-D-glucosyl-(1&lt;-&gt;1')-ceramide + H2O = a beta-D-3-sulfogalactosyl-(1-&gt;4)-beta-D-glucosyl-(1&lt;-&gt;1')-ceramide + N-acetyl-beta-D-galactosamine. The catalysed reaction is a ganglioside GM2 (d18:1(4E)) + H2O = a ganglioside GM3 (d18:1(4E)) + N-acetyl-beta-D-galactosamine. It carries out the reaction a ganglioside GM2 + H2O = a ganglioside GM3 + N-acetyl-beta-D-galactosamine. The enzyme catalyses beta-D-GalNAc-(1-&gt;4)-alpha-L-IdoA-(1-&gt;3)-beta-D-GalNAc-4-sulfate-(1-&gt;4)-alpha-L-IdoA-(1-&gt;3)-D-GalNAc-4-sulfate + H2O = alpha-L-IdoA-(1-&gt;3)-beta-D-GalNAc-4-sulfate-(1-&gt;4)-alpha-L-IdoA-(1-&gt;3)-D-GalNAc-4-sulfate + N-acetyl-D-galactosamine. It catalyses the reaction N-acetyl-beta-D-6-sulfogalactosaminyl-(1-&gt;4)-alpha-L-iduronyl-(1-&gt;3)-N-acetyl-D-6-sulfogalactosamine + H2O = alpha-L-iduronyl-(1-&gt;3)-N-acetyl-D-6-sulfogalactosamine + N-acetyl-D-6-sulfogalactosamine. Addition of GM2A stimulates the hydrolysis of sulfated glycosphingolipid SM2 and the ganglioside GM2. In terms of biological role, hydrolyzes the non-reducing end N-acetyl-D-hexosamine and/or sulfated N-acetyl-D-hexosamine of glycoconjugates, such as the oligosaccharide moieties from proteins and neutral glycolipids, or from certain mucopolysaccharides. The isozyme B does not hydrolyze each of these substrates, however hydrolyzes efficiently neutral oligosaccharide. Only the isozyme A is responsible for the degradation of GM2 gangliosides in the presence of GM2A. During fertilization is responsible, at least in part, for the zona block to polyspermy. Present in the cortical granules of non-activated oocytes, is exocytosed during the cortical reaction in response to oocyte activation and inactivates the sperm galactosyltransferase-binding site, accounting for the block in sperm binding to the zona pellucida. This chain is Beta-hexosaminidase subunit beta, found in Rattus norvegicus (Rat).